Here is a 536-residue protein sequence, read N- to C-terminus: Putative UDP-glucuronosyltransferase ugt-47 (536 aa).

The signal sequence occupies residues 1 to 21 (MMLQTSTILQLLLFLVGSVSA). Asn-52 and Asn-308 each carry an N-linked (GlcNAc...) asparagine glycan. The helical transmembrane segment at 497–517 (IIVPVLFVLLYCLIIPFFKLI) threads the bilayer.

This sequence belongs to the UDP-glycosyltransferase family.

Its subcellular location is the membrane. The catalysed reaction is glucuronate acceptor + UDP-alpha-D-glucuronate = acceptor beta-D-glucuronoside + UDP + H(+). This is Putative UDP-glucuronosyltransferase ugt-47 (ugt-47) from Caenorhabditis briggsae.